Consider the following 275-residue polypeptide: Methylglyoxal reductase DkgA (275 aa).

The active-site Proton donor is the Y51. H107 is a substrate binding site. An NADP(+)-binding site is contributed by S187–N241.

This sequence belongs to the aldo/keto reductase family. As to quaternary structure, monomer.

The protein resides in the cytoplasm. The enzyme catalyses hydroxyacetone + NADP(+) = methylglyoxal + NADPH + H(+). It carries out the reaction a primary alcohol + NADP(+) = an aldehyde + NADPH + H(+). The catalysed reaction is 2-dehydro-L-idonate + NADP(+) = 2,5-didehydro-D-gluconate + NADPH + H(+). In terms of biological role, aldo-keto reductase that significantly contributes to cellular methylglyoxal detoxification by catalyzing the NADPH-dependent conversion of methylglyoxal to acetol. It also exhibits fairly high activity with glyoxal. Shows broad specificity and can use aromatic aldehydes such as 4-nitrobenzaldehyde, 3-nitrobenzaldehyde and benzaldehyde, and phenylglyoxal. Shows beta-keto ester reductase activity toward ethyl acetoacetate and a variety of 2-substituted derivatives. Also catalyzes the reduction of 2,5-diketo-D-gluconic acid (25DKG) to 2-keto-L-gulonic acid (2KLG) and could be involved in ketogluconate metabolism. However, the specific activity of the enzyme toward 2,5-diketo-D-gluconate was reported to be almost 400-fold lower than its activity toward methylglyoxal. Can catalyze in vitro the NADPH-dependent reduction of furfural, a natural product of lignocellulosic decomposition, to the less toxic product, furfuryl alcohol. However, it is unlikely that furfural is a physiological substrate. This chain is Methylglyoxal reductase DkgA, found in Escherichia coli (strain K12).